Here is a 361-residue protein sequence, read N- to C-terminus: MHWITRFSAFFSAALAMILLSPSLQSFSPAAAIRSSHPYADEFKPQQNSDYSSFRESPMFRNAEQCRSSGEDSGVCNPNLVHVAITLDIDYLRGSIAAVNSILQHSMCPQSVFFHFLVSSESQNLESLIRSTFPKLTNLKIYYFAPETVQSLISSSVRQALEQPLNYARNYLADLLEPCVKRVIYLDSDLVVVDDIVKLWKTGLGQRTIGAPEYCHANFTKYFTGGFWSDKRFNGTFKGRNPCYFNTGVMVIDLKKWRQFRFTKRIEKWMEIQKIERIYELGSLPPFLLVFAGHVAPISHRWNQHGLGGDNVRGSCRDLHSGPVSLLHWSGSGKPWLRLDSKLPCPLDTLWAPYDLYKHSH.

Over 1-6 (MHWITR) the chain is Cytoplasmic. Residues 7-27 (FSAFFSAALAMILLSPSLQSF) traverse the membrane as a helical; Signal-anchor for type II membrane protein segment. At 28–361 (SPAAAIRSSH…APYDLYKHSH (334 aa)) the chain is on the lumenal side. 2 N-linked (GlcNAc...) asparagine glycosylation sites follow: asparagine 218 and asparagine 234.

It belongs to the glycosyltransferase 8 family.

It is found in the golgi apparatus membrane. It functions in the pathway glycan metabolism; pectin biosynthesis. May be involved in pectin and/or xylans biosynthesis in cell walls. The chain is Probable galacturonosyltransferase-like 5 (GATL5) from Arabidopsis thaliana (Mouse-ear cress).